The primary structure comprises 270 residues: Probable thioesterase BOA10 (270 aa).

The protein belongs to the AMT4 thioesterase family.

It participates in polyketide biosynthesis. Probable thioesterase; part of the gene cluster B that mediates the biosynthesis of botcinic acid and its botcinin derivatives, acetate-derived polyketides that contribute to virulence when combined with the sesquiterpene botrydial. Botcinic acid and its derivatives have been shown to induce chlorosis and necrosis during host plant infection, but also have antifungal activities. Two polyketide synthases, BOA6 and BOA9, are involved in the biosynthesis of botcinins. BOA6 mediates the formation of the per-methylated tetraketide core by condensation of four units of malonyl-CoA with one unit of acetyl-CoA, which would be methylated in activated methylene groups to yield a bicyclic acid intermediate that could then either be converted to botrylactone derivatives or lose the starter acetate unit through a retro-Claisen type C-C bond cleavage to yield botcinin derivatives. The second polyketide synthase, BOA9, is probably required for the biosynthesis of the tetraketide side chain of botcinins. The methyltransferase (MT) domain within BOA6 is probably responsible for the incorporation of four methyl groups. The trans-enoyl reductase BOA5 might take over the enoyl reductase function of BOA6 that misses an ER domain. The monooxygenases BOA2, BOA3 and BOA4 might be involved in further hydroxylations at C4, C5 and C8, whereas BOA7, close to BOA9, could potentially be involved in the hydroxylation at C4 in the side chain of botcinins. In Botryotinia fuckeliana (strain B05.10) (Noble rot fungus), this protein is Probable thioesterase BOA10.